Consider the following 75-residue polypeptide: M-myrmeciitoxin-Mp2a (75 aa).

The first 26 residues, 1–26 (MKLSCLLLTLAIIFVLTIVHAPNVEA), serve as a signal peptide directing secretion. A propeptide spanning residues 27 to 48 (KALADPESDAVGFADAVGEADP) is cleaved from the precursor. At Leu-74 the chain carries Leucine amide.

This sequence belongs to the formicidae venom precursor-01 superfamily. Ant pilosulin family. In terms of assembly, heterodimer with M-MIITX-Mp2b (pilosin-3b) (AC P0C023); disulfide-linked. Only heterodimers (and not monomers) have been identified in the venom. Expressed by the venom gland.

The protein resides in the secreted. Functionally, heterodimer protein that may serve both defensive (pain-inducing) and predatory (insecticidal) roles. Has membrane-disrupting activity and shows induction of non-specific calcium influx into cells,. Shows broad-spectrum activity against a diverse range of bacteria, and cell lines, as well as hemolytic activity (EC(50)=2.18 uM). In vivo, shows moderate insecticidal activity against D.melanogaster and potent anthelmintic activity against the veterinary nematode H.contortus. In addition, intraplantar injection into mice induces nocifensive behavior and mechanical allodynia. The protein is M-myrmeciitoxin-Mp2a of Myrmecia pilosula (Jack jumper ant).